The chain runs to 364 residues: DNA primase large subunit PriL (364 aa).

[4Fe-4S] cluster is bound by residues C237, C309, C318, and C325. Residues 345-364 (MQNDNEKGHEEKKEGETPPQ) form a disordered region.

Belongs to the eukaryotic-type primase large subunit family. In terms of assembly, heterodimer of a small subunit (PriS) and a large subunit (PriL). [4Fe-4S] cluster is required as a cofactor.

Regulatory subunit of DNA primase, an RNA polymerase that catalyzes the synthesis of short RNA molecules used as primers for DNA polymerase during DNA replication. Stabilizes and modulates the activity of the small subunit, increasing the rate of DNA synthesis, and conferring RNA synthesis capability. The DNA polymerase activity may enable DNA primase to also catalyze primer extension after primer synthesis. May also play a role in DNA repair. The chain is DNA primase large subunit PriL from Methanococcoides burtonii (strain DSM 6242 / NBRC 107633 / OCM 468 / ACE-M).